Reading from the N-terminus, the 234-residue chain is Large ribosomal subunit protein uL1 (234 aa).

It belongs to the universal ribosomal protein uL1 family. Part of the 50S ribosomal subunit.

In terms of biological role, binds directly to 23S rRNA. The L1 stalk is quite mobile in the ribosome, and is involved in E site tRNA release. Functionally, protein L1 is also a translational repressor protein, it controls the translation of the L11 operon by binding to its mRNA. This Sodalis glossinidius (strain morsitans) protein is Large ribosomal subunit protein uL1.